The sequence spans 323 residues: tRNA-dihydrouridine(20/20a) synthase (323 aa).

FMN is bound by residues 14–16 and glutamine 66; that span reads PML. Residue cysteine 96 is the Proton donor of the active site. FMN is bound by residues lysine 135, histidine 166, 206–208, and 228–229; these read NGG and GR.

It belongs to the Dus family. DusA subfamily. FMN serves as cofactor.

It carries out the reaction 5,6-dihydrouridine(20) in tRNA + NADP(+) = uridine(20) in tRNA + NADPH + H(+). The enzyme catalyses 5,6-dihydrouridine(20) in tRNA + NAD(+) = uridine(20) in tRNA + NADH + H(+). The catalysed reaction is 5,6-dihydrouridine(20a) in tRNA + NADP(+) = uridine(20a) in tRNA + NADPH + H(+). It catalyses the reaction 5,6-dihydrouridine(20a) in tRNA + NAD(+) = uridine(20a) in tRNA + NADH + H(+). In terms of biological role, catalyzes the synthesis of 5,6-dihydrouridine (D), a modified base found in the D-loop of most tRNAs, via the reduction of the C5-C6 double bond in target uridines. Specifically modifies U20 and U20a in tRNAs. This Haemophilus ducreyi (strain 35000HP / ATCC 700724) protein is tRNA-dihydrouridine(20/20a) synthase.